The sequence spans 419 residues: Methylthioribose kinase (419 aa).

Positions 49 and 64 each coordinate ATP. Residue Asp-239 participates in substrate binding. 256–258 (DPE) serves as a coordination point for ATP. Arg-365 serves as a coordination point for substrate.

Belongs to the methylthioribose kinase family. Homodimer.

It catalyses the reaction 5-(methylsulfanyl)-D-ribose + ATP = 5-(methylsulfanyl)-alpha-D-ribose 1-phosphate + ADP + H(+). The enzyme catalyses 5-deoxy-D-ribose + ATP = 5-deoxy-alpha-D-ribose 1-phosphate + ADP + H(+). It functions in the pathway amino-acid biosynthesis; L-methionine biosynthesis via salvage pathway; S-methyl-5-thio-alpha-D-ribose 1-phosphate from S-methyl-5'-thioadenosine (hydrolase route): step 2/2. Catalyzes the phosphorylation of methylthioribose into methylthioribose-1-phosphate. Also catalyzes the phosphorylation of 5-deoxyribose to 5-deoxyribose-1-phosphate. Part of a bifunctional DHAP-shunt salvage pathway for SAM by-products. This chain is Methylthioribose kinase, found in Escherichia coli O45:K1 (strain S88 / ExPEC).